The following is a 146-amino-acid chain: Large ribosomal subunit protein uL15 (146 aa).

Residues 1 to 58 form a disordered region; the sequence is MRLHELHPAPGSRPRATRVGRGIGSGLGKTSGRGHKGQKARSGGGVRRGFEGGQMPLT. A compositionally biased stretch (gly residues) spans 21–31; the sequence is RGIGSGLGKTS.

Belongs to the universal ribosomal protein uL15 family. As to quaternary structure, part of the 50S ribosomal subunit.

In terms of biological role, binds to the 23S rRNA. This Moorella thermoacetica (strain ATCC 39073 / JCM 9320) protein is Large ribosomal subunit protein uL15.